We begin with the raw amino-acid sequence, 326 residues long: Methyltransferase phqN (326 aa).

This sequence belongs to the class I-like SAM-binding methyltransferase superfamily. Erg6/SMT family.

The protein operates within alkaloid biosynthesis. Functionally, methyltransferase; part of the gene cluster that mediates the biosynthesis of paraherquamide, a fungal indole alkaloid that belongs to a family of natural products containing a characteristic bicyclo[2.2.2]diazaoctane core. The first steps in the biosynthesis of paraherquamide is the production of the beta-methyl-proline precursor from L-isoleucine. They require oxidation of a terminally hydroxylated L-isoleucine to the corresponding aldehyde by enzymes which have still to be identified. Spontaneous cyclization and dehydration would yield the 4-methyl pyrolline-5-carboxylic acid, which is then reduced by the pyrroline-5-carboxylate reductase phqD leading to the beta-methyl-proline precursor. The next step of paraherquamide biosynthesis involves coupling of beta-methyl-proline and L-tryptophan by the bimodular NRPS phqB, to produce a monooxopiperazine intermediate. The reductase (R) domain of phqB utilizes NADPH for hydride transfer to reduce the thioester bond of the T domain-tethered linear dipeptide to a hemithioaminal intermediate, which spontaneously cleaves the C-S bond to release the aldehyde product. This compound undergoes spontaneous cyclization and dehydration to give a dienamine which is reverse prenylated at C-2 by the reverse prenyltransferase phqJ. The other prenyltransferase present in the cluster, phqI may be a redundant gene in the pathway. During biosynthetic assembly, the key step to produce the polycyclic core is catalyzed by the bifunctional reductase and intramolecular [4+2] Diels-Alderase, phqE, resulting in formation of the [2.2.2] diazaoctane intermediate preparaherquamide. Following formation of preparaherquamide, an indole 2,3-epoxidation-initiated pinacol-like rearrangement is catalyzed by the phqK FAD-dependent monooxygenase. The prenyltransferase phqA, the cytochrome P450 monooxygenase phqL, and the FAD-linked oxidoreductase phqH (or the cytochrome P450 monooxygenase phqM), are proposed to be involved in the formation of the pyran ring. The FAD-dependent monooxygenase phqK is likely responsible for generation of the spiro-oxindole, and the N-methylation is likely mediated by the phqN methyltransferase leading to the isolable natural product paraherquamide F. However, the order of these biosynthetic steps has still to be determined. In late-stage paraherquamide biosynthesis, the third P450 monooxygenase, phqO, is probably responsible for the C-14 hydroxylation, transforming paraherquamide F to paraherquamide G, and paraherquamide E to the final product paraherquamide A. The expansion from the 6-membered ring pyran (in paraherquamides F and G) to the 7-membered dioxepin ring (in paraherquamides A and E) represents a poorly understood but intriguing process that probably involves the 2-oxoglutarate-dependent dioxygenase phqC. Finally, the remaining members of the paraherquamide cluster, including phqI as well as phqM (or phqH), do not have a clearly prescribed role and appear to be redundant. The chain is Methyltransferase phqN from Penicillium fellutanum.